We begin with the raw amino-acid sequence, 222 residues long: N-(5'-phosphoribosyl)anthranilate isomerase (222 aa).

It belongs to the TrpF family.

It carries out the reaction N-(5-phospho-beta-D-ribosyl)anthranilate = 1-(2-carboxyphenylamino)-1-deoxy-D-ribulose 5-phosphate. The protein operates within amino-acid biosynthesis; L-tryptophan biosynthesis; L-tryptophan from chorismate: step 3/5. The protein is N-(5'-phosphoribosyl)anthranilate isomerase of Rhizobium etli (strain CIAT 652).